Here is a 184-residue protein sequence, read N- to C-terminus: Non-fimbrial adhesin 1 (184 aa).

An N-terminal signal peptide occupies residues 1-28; sequence MKAKKYENQIYNENGRRCQRHGRRLAIA. A disulfide bridge connects residues Cys57 and Cys91.

Forms a polymeric structure, which disintegrates with elevated temperature into a monomer but with some relatively stable dimers.

This Escherichia coli protein is Non-fimbrial adhesin 1 (nfaA).